Here is a 146-residue protein sequence, read N- to C-terminus: uncharacterized protein (146 aa).

The segment covering 119–128 (AQADLEHEES) has biased composition (basic and acidic residues). Positions 119–146 (AQADLEHEESASIDQDEMVAIETRKTKK) are disordered.

This is an uncharacterized protein from Schizosaccharomyces pombe (strain 972 / ATCC 24843) (Fission yeast).